The following is a 472-amino-acid chain: Chromosomal replication initiator protein DnaA (472 aa).

A domain I, interacts with DnaA modulators region spans residues 1 to 73 (MSNMEQDRWS…LSCWQAELPE (73 aa)). Residues 73–128 (EVNRVDLTVRSPVRCATPAKEVPAPVESRRDEQRPSAERSNGATPVSANHDALGGS) are domain II. The disordered stretch occupies residues 90–124 (PAKEVPAPVESRRDEQRPSAERSNGATPVSANHDA). Over residues 99–109 (ESRRDEQRPSA) the composition is skewed to basic and acidic residues. Residues 110–119 (ERSNGATPVS) are compositionally biased toward polar residues. The interval 129–351 (PLDPRLTFAS…GAINRLLAHS (223 aa)) is domain III, AAA+ region. Residues G176, G178, K179, and T180 each coordinate ATP. Residues 352-472 (KLNNQPVTLE…VESLKRQLQE (121 aa)) are domain IV, binds dsDNA.

The protein belongs to the DnaA family. As to quaternary structure, oligomerizes as a right-handed, spiral filament on DNA at oriC.

The protein localises to the cytoplasm. Its function is as follows. Plays an essential role in the initiation and regulation of chromosomal replication. ATP-DnaA binds to the origin of replication (oriC) to initiate formation of the DNA replication initiation complex once per cell cycle. Binds the DnaA box (a 9 base pair repeat at the origin) and separates the double-stranded (ds)DNA. Forms a right-handed helical filament on oriC DNA; dsDNA binds to the exterior of the filament while single-stranded (ss)DNA is stabiized in the filament's interior. The ATP-DnaA-oriC complex binds and stabilizes one strand of the AT-rich DNA unwinding element (DUE), permitting loading of DNA polymerase. After initiation quickly degrades to an ADP-DnaA complex that is not apt for DNA replication. Binds acidic phospholipids. This is Chromosomal replication initiator protein DnaA from Rhodopseudomonas palustris (strain ATCC BAA-98 / CGA009).